We begin with the raw amino-acid sequence, 665 residues long: Protein LOW PHOTOSYNTHETIC EFFICIENCY 1, chloroplastic (665 aa).

Residues 1 to 68 constitute a chloroplast transit peptide; the sequence is MQALSILPLK…VSSNRKVLFL (68 aa). PPR repeat units lie at residues 145 to 179, 181 to 217, 218 to 252, 253 to 283, 309 to 344, 345 to 375, 380 to 414, 422 to 456, 457 to 491, 492 to 526, 527 to 561, 562 to 596, and 597 to 631; these read PLQV…KSES, GVIG…GIVP, NIVT…GFEP, NPIT…LREK, GRIC…GVRP, SREE…IRER, SLSV…GPEP, VVSH…GLKP, QRRH…GEKP, TVIS…GIEP, NLYA…GIEP, SVVT…NVEP, and NEIT…GLKL.

This sequence belongs to the PPR family. P subfamily. As to quaternary structure, interacts with HCF173.

It is found in the plastid. The protein localises to the chloroplast thylakoid membrane. The protein resides in the chloroplast stroma. In terms of biological role, required for light-regulated photosystem II (PSII) biogenesis and grana thylakoids formation by binding to the 5' UTR of PSII subunit mRNAs (e.g. psbJ, psbN and psbA) in a light-dependent manner through a redox-based mechanism, and facilitating the association of HCF173 with target mRNAs, which encodes PSII reaction center proteins (e.g. J, N and D1), thus regulating its expression by modulating ribosome loading. This Arabidopsis thaliana (Mouse-ear cress) protein is Protein LOW PHOTOSYNTHETIC EFFICIENCY 1, chloroplastic.